The chain runs to 638 residues: Threonine--tRNA ligase (638 aa).

One can recognise a TGS domain in the interval 1 to 61; that stretch reads MPNITLPDGS…EADTPLAIVT (61 aa). A catalytic region spans residues 242–533; the sequence is DHRKLGRLLD…LIEHYAGALP (292 aa). 3 residues coordinate Zn(2+): Cys-333, His-384, and His-510.

This sequence belongs to the class-II aminoacyl-tRNA synthetase family. As to quaternary structure, homodimer. Zn(2+) serves as cofactor.

Its subcellular location is the cytoplasm. It catalyses the reaction tRNA(Thr) + L-threonine + ATP = L-threonyl-tRNA(Thr) + AMP + diphosphate + H(+). In terms of biological role, catalyzes the attachment of threonine to tRNA(Thr) in a two-step reaction: L-threonine is first activated by ATP to form Thr-AMP and then transferred to the acceptor end of tRNA(Thr). Also edits incorrectly charged L-seryl-tRNA(Thr). The protein is Threonine--tRNA ligase of Aromatoleum aromaticum (strain DSM 19018 / LMG 30748 / EbN1) (Azoarcus sp. (strain EbN1)).